Reading from the N-terminus, the 206-residue chain is Molybdopterin synthase catalytic subunit (206 aa).

Residues 1 to 23 (MATQQPTQTDNSAQAQPPQTNPA) show a composition bias toward polar residues. The segment at 1–27 (MATQQPTQTDNSAQAQPPQTNPAKPTE) is disordered. Substrate is bound by residues 131–132 (HR), Lys-147, and 154–156 (KRE). The segment covering 177 to 188 (KVDEPRIGKGEV) has biased composition (basic and acidic residues). The tract at residues 177–206 (KVDEPRIGKGEVDEKEDEGDSGNGGNDRKS) is disordered. Gly residues predominate over residues 197 to 206 (SGNGGNDRKS).

Belongs to the MoaE family. MOCS2B subfamily. Heterotetramer; composed of 2 small (MOCS2A) and 2 large (MOCS2B) subunits.

The protein localises to the cytoplasm. The enzyme catalyses 2 [molybdopterin-synthase sulfur-carrier protein]-C-terminal-Gly-aminoethanethioate + cyclic pyranopterin phosphate + H2O = molybdopterin + 2 [molybdopterin-synthase sulfur-carrier protein]-C-terminal Gly-Gly + 2 H(+). The protein operates within cofactor biosynthesis; molybdopterin biosynthesis. In terms of biological role, catalytic subunit of the molybdopterin synthase complex, a complex that catalyzes the conversion of precursor Z into molybdopterin. Acts by mediating the incorporation of 2 sulfur atoms from thiocarboxylated MOCS2A into precursor Z to generate a dithiolene group. The protein is Molybdopterin synthase catalytic subunit (nit-8) of Neurospora crassa (strain ATCC 24698 / 74-OR23-1A / CBS 708.71 / DSM 1257 / FGSC 987).